Here is a 54-residue protein sequence, read N- to C-terminus: ATP synthase protein 8 (54 aa).

A helical membrane pass occupies residues 9–25 (WVFLFFLVWLVLGFLGL).

It belongs to the ATPase protein 8 family. As to quaternary structure, F-type ATPases have 2 components, CF(1) - the catalytic core - and CF(0) - the membrane proton channel.

Its subcellular location is the mitochondrion membrane. Functionally, mitochondrial membrane ATP synthase (F(1)F(0) ATP synthase or Complex V) produces ATP from ADP in the presence of a proton gradient across the membrane which is generated by electron transport complexes of the respiratory chain. F-type ATPases consist of two structural domains, F(1) - containing the extramembraneous catalytic core and F(0) - containing the membrane proton channel, linked together by a central stalk and a peripheral stalk. During catalysis, ATP synthesis in the catalytic domain of F(1) is coupled via a rotary mechanism of the central stalk subunits to proton translocation. Part of the complex F(0) domain. Minor subunit located with subunit a in the membrane. This is ATP synthase protein 8 (MTATP8) from Branchiostoma floridae (Florida lancelet).